Consider the following 116-residue polypeptide: Toxin CSTX-10 (116 aa).

The signal sequence occupies residues 1-20 (MKVLVIFAVLSLVIFSNCSA). Positions 21–47 (ETDEDFFGEESFEADDIIPFIAKEQVR) are excised as a propeptide. Cystine bridges form between cysteine 53/cysteine 68, cysteine 60/cysteine 77, cysteine 67/cysteine 94, and cysteine 79/cysteine 92.

Expressed by the venom gland.

It localises to the secreted. The protein resides in the target cell membrane. Functionally, spider venom toxin that shows calcium channel blocking activity and exhibits cytolytic activity by affecting the outer leaflet curvature and/or pore formation across the membrane. It blocks L-type calcium channels (Cav1/CACNA1) in mammalian neurons at nanomolar concentrations. Furthermore, it produces a slow voltage-independent block of mid/low and high voltage-activated calcium channels in cockroach neurons. Potassium ions, histamine, M-ctenitoxin-Cs1a (AC P83619), CSTX-9 (AC P58604), and CSTX-13 (AC P83919) synergistically increase the insecticidal activity of this toxin. In vivo, it causes paralysis in blow flies and provokes death in drosophila. This Cupiennius salei (American wandering spider) protein is Toxin CSTX-10.